We begin with the raw amino-acid sequence, 642 residues long: Bud site selection protein 5 (642 aa).

The 116-residue stretch at 224-339 (EVFRIQLYLN…DIVQLFINKK (116 aa)) folds into the N-terminal Ras-GEF domain. The Ras-GEF domain occupies 412–640 (SPWSLAKTLT…YQVSIAKVPR (229 aa)).

Interacts with AXL2, BEM1, GSP1 and in haploid cells with AXL1.

The protein resides in the bud neck. It is found in the cytoplasm. Its subcellular location is the cell cortex. In terms of biological role, GDP-GTP exchange factor (GEF) for the small GTPase BUD1/RSR1. Regulates the activity of BUD1 together with BUD2 which is a GTPase-activating protein (GAP) of BUD1. Required to produce both the axial and bipolar patterns of bud site selection. Determines the orientation of division axis. Overexpression can suppress mutations in PRP20 which is the GEF for GSP1. May be a cytoplasmic GEF for GSP1. Might also act on the Ras-like protein CDC42. Appears to bind to Ras proteins but not to activate them. This is Bud site selection protein 5 (BUD5) from Saccharomyces cerevisiae (strain ATCC 204508 / S288c) (Baker's yeast).